The sequence spans 1393 residues: MVEPGQDLLLAALSESGISPNDLFDIDGGDAGLATPMPTPSVQQSVPLSALELGLETEAAVPVKQEPETVPTPALLNVRQQPPSTTTFVLNQINHLPPLGSTIVMTKTPPVTTNRQTITLTKFIQTTASTRPSVSAPTVRNAMTSAPSKDQVQLKDLLKNNSLNELMKLKPPANIAQPVATAATDVSNGTVKKESSNKEGARMWINDMKMRSFSPTMKVPVVKEDDEPEEEDEEEMGHAETYAEYMPIKLKIGLRHPDAVVETSSLSSVTPPDVWYKTSISEETIDNGWLSALQLEAITYAAQQHETFLPNGDRAGFLIGDGAGVGKGRTIAGIIYENYLLSRKRALWFSVSNDLKYDAERDLRDIGAKNILVHSLNKFKYGKISSKHNGSVKKGVIFATYSSLIGESQSGGKYKTRLKQLLHWCGDDFDGVIVFDECHKAKNLCPVGSSKPTKTGLAVLELQNKLPKARVVYASATGASEPRNMAYMNRLGIWGEGTPFREFSDFIQAVERRGVGAMEIVAMDMKLRGMYIARQLSFTGVTFKIEEVLLSQSYVKMYNKAVKLWVIARERFQQAADLIDAEQRMKKSMWGQFWSAHQRFFKYLCIASKVKRVVQLAREEIKNGKCVVIGLQSTGEARTLEALEEGGGELNDFVSTAKGVLQSLIEKHFPAPDRKKLYSLLGIDLTAPSNNSSPRDSPCKENKIKKRKGEEITREAKKARKVGGLTGSSSDDSGSESDASDNEESDYESSKNMSSGDDDDFNPFLDESNEDDENDPWLIRKDHKKNKEKKKKKSIDPDSIQSALLASGLGSKRPSFSSTPVISPAPNSTPANSNTNSNSSLITSQDAVERAQQMKKDLLDKLEKLAEDLPPNTLDELIDELGGPENVAEMTGRKGRVVSNDDGSISYESRSELDVPVEILNITEKQRFMDGDKNIAIISEAASSGISLQADRRAKNQRRRVHMTLELPWSADRAIQQFGRTHRSNQVTAPEYVFLISELAGEQRFASIVAKRLESLGALTHGDRRATESRDLSRFNFDNKYGRNALEIVMKSIVNLDSPMVSPPPDYPGEFFKDVRQGLIGVGLINVEDRSGILTLDKDYNNIGKFLNRILGMEVHQQNALFQYFADTLTAVVQNAKKNGRYDMGILDLGSGDEKVRKSDVKKFLTPGYSTSGHVELYTISVERGMSWEEATKIWAELTGPDDGFYLSLQIRNNKKTAILVKEVNPKKKLFLVYRPNTGKQLKLEIYADLKKKYKKVVSDDALMHWLDQYNSSADTCTHAYWRGNCKKASLGLVCEIGLRCRTYYVLCGSVLSVWTKVEGVLASVSGTNVKMQIVRLRTEDGQRIVGLIIPANCVSPLVNLLSTSDQSQQLAVQQKQLWQQHHPQSITNLSNA.

Positions 129-148 (STRPSVSAPTVRNAMTSAPS) are disordered. Residue S148 is modified to Phosphoserine. The residue at position 149 (K149) is an N6-acetyllysine. S162 and S214 each carry phosphoserine. K413 carries the N6-acetyllysine modification. The interval 687-840 (APSNNSSPRD…ANSNTNSNSS (154 aa)) is disordered. A phosphoserine mark is found at S692, S693, and S697. Over residues 697–716 (SPCKENKIKKRKGEEITREA) the composition is skewed to basic and acidic residues. The span at 733 to 747 (SGSESDASDNEESDY) shows a compositional bias: acidic residues. Residues S754, S755, and S768 each carry the phosphoserine modification. Residues 756 to 775 (GDDDDFNPFLDESNEDDEND) are compositionally biased toward acidic residues. Positions 781-793 (KDHKKNKEKKKKK) are enriched in basic residues. Phosphoserine occurs at positions 794 and 815. A compositionally biased stretch (low complexity) spans 824 to 840 (PAPNSTPANSNTNSNSS). Positions 843-870 (TSQDAVERAQQMKKDLLDKLEKLAEDLP) form a coiled coil. Position 1222 is an N6-acetyllysine (K1222). S1386 carries the post-translational modification Phosphoserine.

The protein belongs to the SBNO family.

It is found in the nucleus. In terms of biological role, plays a crucial role in the regulation of neural stem cells (NSCs) proliferation. Enhances the phosphorylation of GSK3B through the PI3K-Akt signaling pathway, thereby upregulating the Wnt/beta-catenin signaling pathway and promoting the proliferation of NSCs. Improves ischemic stroke recovery while inhibiting neuroinflammation through small extracellular vesicles (sEVs)-mediated mechanism. Enhances the secretion of sEVs from NSCs, which in turn inhibit both the MAPK and NF-kappaB pathways in microglia. This inhibition suppresses the pro-inflammatory M1 polarization of microglia, promoting a shift towards the M2 anti-inflammatory phenotype, which is beneficial for reducing neuroinflammation. In Homo sapiens (Human), this protein is Protein strawberry notch homolog 1 (SBNO1).